We begin with the raw amino-acid sequence, 33 residues long: Mu-theraphotoxin-Tp1a (33 aa).

Cystine bridges form between Cys-2–Cys-17, Cys-9–Cys-22, and Cys-16–Cys-29. Position 33 is an isoleucine amide (Ile-33).

This sequence belongs to the neurotoxin 10 (Hwtx-1) family. 55 (ProTx-III) subfamily. As to expression, expressed by the venom gland.

It localises to the secreted. Inhibits voltage-gated sodium channels without significantly altering the voltage dependence of activation or inactivation. Preferentially inhibits human Nav1.7/SCN9A (IC(50)=2.1 nM) &gt; human Nav1.6/SCN8A &gt; human Nav1.2/SCN2A &gt; human Nav1.1/SCN1A &gt; human Nav1.3/SCN3A channels. Exhibits analgesic properties by reversing spontaneous pain induced in mice by intraplantar injection with OD1 (AC P84646), a scorpion toxin that potentiates human Nav1.7/SCN9A. In Thrixopelma pruriens (Peruvian green velvet tarantula), this protein is Mu-theraphotoxin-Tp1a.